A 210-amino-acid chain; its full sequence is MDKKKNISMAVIRRLPKYHRYLYELLKNDVDRISSKELSEKIGFTASQIRQDLNCFGDFGQQGYGYNVSELHHQISNILGLNNPYNIIIIGAGNIGQALANYTRFSKLGFNVKAMFDTNPKLIGLKIREIEILDIDYLSSYLEKNNIDIGIICVPHDNAQKVANILVKNDIKGIWNFAPIDLSVPEDVVVENVHLSDSLLTLTCLINKTE.

Residues 17–56 (KYHRYLYELLKNDVDRISSKELSEKIGFTASQIRQDLNCF) constitute a DNA-binding region (H-T-H motif). An NAD(+)-binding site is contributed by 91–96 (GAGNIG).

Belongs to the transcriptional regulatory Rex family. As to quaternary structure, homodimer.

Its subcellular location is the cytoplasm. Functionally, modulates transcription in response to changes in cellular NADH/NAD(+) redox state. This Clostridium botulinum (strain ATCC 19397 / Type A) protein is Redox-sensing transcriptional repressor Rex.